A 52-amino-acid polypeptide reads, in one-letter code: Troponin C, skeletal muscle (52 aa).

EF-hand domains follow at residues 2-37 (KSEE…SGEH) and 38-52 (VTDE…DGDK). Aspartate 15, asparagine 17, aspartate 19, tyrosine 21, and glutamate 26 together coordinate Ca(2+).

The protein belongs to the troponin C family.

In terms of biological role, troponin is the central regulatory protein of striated muscle contraction. Tn consists of three components: Tn-I which is the inhibitor of actomyosin ATPase, Tn-T which contains the binding site for tropomyosin and Tn-C. The binding of calcium to Tn-C abolishes the inhibitory action of Tn on actin filaments. This Protopterus dolloi (Slender lungfish) protein is Troponin C, skeletal muscle.